The chain runs to 185 residues: Ribosome-recycling factor (185 aa).

It belongs to the RRF family.

It is found in the cytoplasm. Its function is as follows. Responsible for the release of ribosomes from messenger RNA at the termination of protein biosynthesis. May increase the efficiency of translation by recycling ribosomes from one round of translation to another. The sequence is that of Ribosome-recycling factor from Bacillus cytotoxicus (strain DSM 22905 / CIP 110041 / 391-98 / NVH 391-98).